The sequence spans 556 residues: Glutamine--tRNA ligase (556 aa).

A 'HIGH' region motif is present at residues 34-44 (PEPNGYLHIGH). ATP is bound by residues 35-37 (EPN) and 41-47 (HIGHAKS). Residues Asp-67 and Tyr-212 each coordinate L-glutamine. ATP-binding positions include Thr-231, 263 to 264 (RL), and 271 to 273 (MSK). Residues 270-274 (VMSKR) carry the 'KMSKS' region motif.

The protein belongs to the class-I aminoacyl-tRNA synthetase family. As to quaternary structure, monomer.

It is found in the cytoplasm. It catalyses the reaction tRNA(Gln) + L-glutamine + ATP = L-glutaminyl-tRNA(Gln) + AMP + diphosphate. This is Glutamine--tRNA ligase from Nitrosomonas europaea (strain ATCC 19718 / CIP 103999 / KCTC 2705 / NBRC 14298).